The chain runs to 616 residues: Dihydroxy-acid dehydratase (616 aa).

Position 81 (D81) interacts with Mg(2+). Position 122 (C122) interacts with [2Fe-2S] cluster. The Mg(2+) site is built by D123 and K124. K124 carries the post-translational modification N6-carboxylysine. A [2Fe-2S] cluster-binding site is contributed by C195. Residue E491 coordinates Mg(2+). The active-site Proton acceptor is S517.

This sequence belongs to the IlvD/Edd family. Homodimer. It depends on [2Fe-2S] cluster as a cofactor. Mg(2+) is required as a cofactor.

It carries out the reaction (2R)-2,3-dihydroxy-3-methylbutanoate = 3-methyl-2-oxobutanoate + H2O. It catalyses the reaction (2R,3R)-2,3-dihydroxy-3-methylpentanoate = (S)-3-methyl-2-oxopentanoate + H2O. Its pathway is amino-acid biosynthesis; L-isoleucine biosynthesis; L-isoleucine from 2-oxobutanoate: step 3/4. It participates in amino-acid biosynthesis; L-valine biosynthesis; L-valine from pyruvate: step 3/4. Functionally, functions in the biosynthesis of branched-chain amino acids. Catalyzes the dehydration of (2R,3R)-2,3-dihydroxy-3-methylpentanoate (2,3-dihydroxy-3-methylvalerate) into 2-oxo-3-methylpentanoate (2-oxo-3-methylvalerate) and of (2R)-2,3-dihydroxy-3-methylbutanoate (2,3-dihydroxyisovalerate) into 2-oxo-3-methylbutanoate (2-oxoisovalerate), the penultimate precursor to L-isoleucine and L-valine, respectively. The sequence is that of Dihydroxy-acid dehydratase from Blochmanniella pennsylvanica (strain BPEN).